A 207-amino-acid polypeptide reads, in one-letter code: MPRPASHLAPMPSDHPDFRSESSARLRCQPPRTNNCGTFKQPPSVAATSRPKPGNPFLQPPTKGTPPPKKKKKNHTEGCHTHEANPEPNTKHTETESPKPQTSTQHHTPITIPSSLLSQNTQREKRGLPLLTSRPSTIPANTYQPQSPHIHSHTPLQRPISTALLHQNLHIRARNIRHTGRLHGSPTKGAQTAQQAQPHPPKQLATL.

2 disordered regions span residues 1–154 and 180–207; these read MPRP…HSHT and GRLH…LATL. Composition is skewed to basic and acidic residues over residues 14–24 and 75–97; these read DHPDFRSESSA and HTEG…ETES. Composition is skewed to polar residues over residues 98–121 and 133–149; these read PKPQ…SQNT and SRPS…QSPH.

The protein belongs to the UPF0328 family.

The chain is UPF0328 protein ECU02_1590/ECU04_0060/ECU08_2120 from Encephalitozoon cuniculi (strain GB-M1) (Microsporidian parasite).